We begin with the raw amino-acid sequence, 198 residues long: 8-oxoguanine DNA glycosylase/AP lyase (198 aa).

Active-site residues include Lys-122 and Asp-140.

The protein belongs to the type-2 OGG1 family. Monomer.

The enzyme catalyses 2'-deoxyribonucleotide-(2'-deoxyribose 5'-phosphate)-2'-deoxyribonucleotide-DNA = a 3'-end 2'-deoxyribonucleotide-(2,3-dehydro-2,3-deoxyribose 5'-phosphate)-DNA + a 5'-end 5'-phospho-2'-deoxyribonucleoside-DNA + H(+). Its function is as follows. Catalyzes the excision of an oxidatively damaged form of guanine (7,8-dihydro-8-oxoguanine = 8-oxoG) from DNA. Also cleaves the DNA backbone at apurinic/apyrimidinic sites (AP sites). Efficiently cleaves oligomers containing 8-oxoG:C and 8-oxoG:G base pairs, and is less effective on oligomers containing 8-oxoG:T and 8-oxoG:A mispairs. This Archaeoglobus fulgidus (strain ATCC 49558 / DSM 4304 / JCM 9628 / NBRC 100126 / VC-16) protein is 8-oxoguanine DNA glycosylase/AP lyase.